Consider the following 176-residue polypeptide: NAD(P)H-quinone oxidoreductase subunit 6, chloroplastic (176 aa).

5 consecutive transmembrane segments (helical) span residues 10-30 (ILVLFGGFGLLLGGLGVVLLT), 33-53 (IYSAFSLGLVLVCISLFYFLL), 60-80 (VAQLLIYVGAINVLIIFAVMF), 95-115 (IGDGFTLLLCITIPFSLMTTI), and 152-172 (FYLPFELISLILLVSLIGAIT).

Belongs to the complex I subunit 6 family. NDH is composed of at least 16 different subunits, 5 of which are encoded in the nucleus.

It localises to the plastid. The protein localises to the chloroplast thylakoid membrane. The enzyme catalyses a plastoquinone + NADH + (n+1) H(+)(in) = a plastoquinol + NAD(+) + n H(+)(out). The catalysed reaction is a plastoquinone + NADPH + (n+1) H(+)(in) = a plastoquinol + NADP(+) + n H(+)(out). Its function is as follows. NDH shuttles electrons from NAD(P)H:plastoquinone, via FMN and iron-sulfur (Fe-S) centers, to quinones in the photosynthetic chain and possibly in a chloroplast respiratory chain. The immediate electron acceptor for the enzyme in this species is believed to be plastoquinone. Couples the redox reaction to proton translocation, and thus conserves the redox energy in a proton gradient. The polypeptide is NAD(P)H-quinone oxidoreductase subunit 6, chloroplastic (ndhG) (Zea mays (Maize)).